Reading from the N-terminus, the 474-residue chain is Proline--tRNA ligase (474 aa).

Belongs to the class-II aminoacyl-tRNA synthetase family. ProS type 3 subfamily. In terms of assembly, homodimer.

The protein localises to the cytoplasm. The catalysed reaction is tRNA(Pro) + L-proline + ATP = L-prolyl-tRNA(Pro) + AMP + diphosphate. Its function is as follows. Catalyzes the attachment of proline to tRNA(Pro) in a two-step reaction: proline is first activated by ATP to form Pro-AMP and then transferred to the acceptor end of tRNA(Pro). The protein is Proline--tRNA ligase of Aster yellows witches'-broom phytoplasma (strain AYWB).